A 380-amino-acid polypeptide reads, in one-letter code: Variant-surface-glycoprotein phospholipase C (380 aa).

In terms of domain architecture, PI-PLC X-box spans 31–205 (ITQVCFVGSH…SRRRIFLVVG (175 aa)).

In terms of assembly, monomer.

The protein localises to the membrane. The catalysed reaction is a 6-(alpha-D-glucosaminyl)-1-(1,2-diacyl-sn-glycero-3-phospho)-1D-myo-inositol = 6-(alpha-D-glucosaminyl)-1D-myo-inositol 1,2-cyclic phosphate + a 1,2-diacyl-sn-glycerol. In terms of biological role, by hydrolysis of the attached glycolipid, releases soluble variant surface glycoprotein containing phosphoinositol from the cell wall of T.brucei after cell lysis. It also cleaves similar membrane anchors on some mammalian proteins. VSG lipase may play a role in processes such as parasite differentiation or antigenic variation. This is Variant-surface-glycoprotein phospholipase C from Trypanosoma cruzi.